We begin with the raw amino-acid sequence, 205 residues long: Ras-related protein RABD1 (205 aa).

Residue Ser2 is modified to N-acetylserine. GTP is bound by residues 15-23, 33-40, 63-67, 121-124, and 151-153; these read GDSSVGKSC, YIDSYIST, DTAGQ, NKND, and SAK. The Effector region motif lies at 37–45; sequence YISTIGVDF. 2 stretches are compositionally biased toward polar residues: residues 174 to 186 and 194 to 205; these read GSQT…SGPG and PIQQNNGGCCGQ. The disordered stretch occupies residues 174-205; that stretch reads GSQTNANKTSGPGTVQMKGQPIQQNNGGCCGQ. 2 S-geranylgeranyl cysteine lipidation sites follow: Cys202 and Cys203.

This sequence belongs to the small GTPase superfamily. Rab family. Does not interact with GC5. Interacts with XI-2/MYA2.

It is found in the golgi apparatus. The protein resides in the trans-Golgi network membrane. Its subcellular location is the golgi apparatus membrane. Protein transport. Regulator of membrane traffic from the Golgi apparatus towards the endoplasmic reticulum (ER). This chain is Ras-related protein RABD1 (RABD1), found in Arabidopsis thaliana (Mouse-ear cress).